A 348-amino-acid polypeptide reads, in one-letter code: Phosphoribosylformylglycinamidine cyclo-ligase (348 aa).

It belongs to the AIR synthase family.

Its subcellular location is the cytoplasm. The enzyme catalyses 2-formamido-N(1)-(5-O-phospho-beta-D-ribosyl)acetamidine + ATP = 5-amino-1-(5-phospho-beta-D-ribosyl)imidazole + ADP + phosphate + H(+). It participates in purine metabolism; IMP biosynthesis via de novo pathway; 5-amino-1-(5-phospho-D-ribosyl)imidazole from N(2)-formyl-N(1)-(5-phospho-D-ribosyl)glycinamide: step 2/2. This Geobacter sulfurreducens (strain ATCC 51573 / DSM 12127 / PCA) protein is Phosphoribosylformylglycinamidine cyclo-ligase.